A 57-amino-acid polypeptide reads, in one-letter code: UPF0391 membrane protein bsl6560 (57 aa).

2 helical membrane passes run 4–24 (WVVT…GGIA) and 30–50 (IAKI…VVGL).

Belongs to the UPF0391 family.

The protein resides in the cell membrane. This Bradyrhizobium diazoefficiens (strain JCM 10833 / BCRC 13528 / IAM 13628 / NBRC 14792 / USDA 110) protein is UPF0391 membrane protein bsl6560.